Here is a 310-residue protein sequence, read N- to C-terminus: Inorganic pyrophosphatase, mitochondrial (310 aa).

Residues 1 to 30 (MNLLRMNALTSKARSIERLKQTLNILSIRN) constitute a mitochondrion transit peptide. Mg(2+) is bound by residues aspartate 152, aspartate 157, and aspartate 189.

It belongs to the PPase family. As to quaternary structure, homodimer that binds non-covalently to a protein complex in the inner mitochondrial membrane. Mg(2+) serves as cofactor.

It localises to the mitochondrion. The enzyme catalyses diphosphate + H2O = 2 phosphate + H(+). Functionally, involved in energy production. Its activity is stimulated by uncouplers of ATP synthesis. The sequence is that of Inorganic pyrophosphatase, mitochondrial (PPA2) from Saccharomyces cerevisiae (strain ATCC 204508 / S288c) (Baker's yeast).